Here is a 43-residue protein sequence, read N- to C-terminus: Protein PsbN (43 aa).

Residues 5 to 27 form a helical membrane-spanning segment; that stretch reads TLVAISISGLLVSFTGYALYTAF.

This sequence belongs to the PsbN family.

It localises to the plastid. The protein localises to the chloroplast thylakoid membrane. Functionally, may play a role in photosystem I and II biogenesis. The sequence is that of Protein PsbN from Coelogyne cristata (Orchid).